Consider the following 103-residue polypeptide: Histone H4 (103 aa).

A compositionally biased stretch (gly residues) spans 1–14 (MSGRGKGGKGLGKG). The interval 1–20 (MSGRGKGGKGLGKGGAKRHR) is disordered. Residues 17–21 (KRHRK) mediate DNA binding.

The protein belongs to the histone H4 family. As to quaternary structure, the nucleosome is a histone octamer containing two molecules each of H2A, H2B, H3 and H4 assembled in one H3-H4 heterotetramer and two H2A-H2B heterodimers. The octamer wraps approximately 147 bp of DNA.

The protein localises to the nucleus. It localises to the chromosome. In terms of biological role, core component of nucleosome. Nucleosomes wrap and compact DNA into chromatin, limiting DNA accessibility to the cellular machineries which require DNA as a template. Histones thereby play a central role in transcription regulation, DNA repair, DNA replication and chromosomal stability. DNA accessibility is regulated via a complex set of post-translational modifications of histones, also called histone code, and nucleosome remodeling. The chain is Histone H4 from Eimeria tenella (Coccidian parasite).